The chain runs to 305 residues: NAD kinase (305 aa).

Residue aspartate 88 is the Proton acceptor of the active site. Residues 88 to 89, arginine 93, 162 to 163, lysine 173, asparagine 192, 203 to 208, and glutamine 262 each bind NAD(+); these read DG, NE, and TAYSFS.

It belongs to the NAD kinase family. A divalent metal cation is required as a cofactor.

Its subcellular location is the cytoplasm. It catalyses the reaction NAD(+) + ATP = ADP + NADP(+) + H(+). Its function is as follows. Involved in the regulation of the intracellular balance of NAD and NADP, and is a key enzyme in the biosynthesis of NADP. Catalyzes specifically the phosphorylation on 2'-hydroxyl of the adenosine moiety of NAD to yield NADP. This chain is NAD kinase, found in Tropheryma whipplei (strain TW08/27) (Whipple's bacillus).